The primary structure comprises 964 residues: Chromatin assembly factor 1 subunit A (964 aa).

The interval 1-49 (MLEEPECGAPGARGEAAAMDCKDRPAFPVKKLIQARLPFKRLNLVPKEK) is binds to PCNA. Positions 1–316 (MLEEPECGAP…LHTGPSPFPA (316 aa)) are binds to CBX1 chromo shadow domain. A phosphoserine mark is found at Ser-126, Ser-141, and Ser-144. Residues 146–232 (AQKNINGVPD…KDRDGWSEAG (87 aa)) form a disordered region. Over residues 156–172 (KAGDDRGLPKARQKDEL) the composition is skewed to basic and acidic residues. Lys-185 is covalently cross-linked (Glycyl lysine isopeptide (Lys-Gly) (interchain with G-Cter in SUMO1); alternate). A Glycyl lysine isopeptide (Lys-Gly) (interchain with G-Cter in SUMO2); alternate cross-link involves residue Lys-185. The PxVxL motif signature appears at 236 to 249 (FKGKMPVVVLQDIL). 2 disordered regions span residues 253-437 (PPAR…REEE) and 601-641 (DSDE…VPHG). Over residues 284–298 (LSHSSLSSSSPTSSP) the composition is skewed to low complexity. The residue at position 312 (Ser-312) is a Phosphoserine. Residues 329–453 (RGSAEKNKMK…KAEITRFFQK (125 aa)) adopt a coiled-coil conformation. The segment covering 331-437 (SAEKNKMKLQ…EEEKRLREEE (107 aa)) has biased composition (basic and acidic residues). Composition is skewed to acidic residues over residues 601-612 (DSDEEWEEEEPG) and 620-635 (GDDD…EDDG). The necessary for homodimerization and competence for chromatin assembly stretch occupies residues 644 to 680 (SEDEGVTEECADPENHKVRQKLKAKEWDEFLAKGKRF). Residues 662–964 (RQKLKAKEWD…FVSPSSLRLS (303 aa)) are binds to p60. A Phosphothreonine modification is found at Thr-723. The disordered stretch occupies residues 769–799 (RDAGSPEDSAASPPSPGPARPQTPTASEDVA). The span at 770–780 (DAGSPEDSAAS) shows a compositional bias: low complexity. 5 positions are modified to phosphoserine: Ser-773, Ser-783, Ser-811, Ser-876, and Ser-881. The disordered stretch occupies residues 859–878 (EDSGSVPAPGPGQGMPVSLK). Disordered regions lie at residues 897–920 (DGQV…DDEG) and 933–964 (IQAP…LRLS). A compositionally biased stretch (acidic residues) spans 904 to 920 (DLDDFQADTEEEDDDEG). Over residues 949 to 964 (MDTSESFVSPSSLRLS) the composition is skewed to polar residues. Ser-959 bears the Phosphoserine mark.

This sequence belongs to the CHAF1A family. In terms of assembly, homodimer. Part of the CAF-1 complex that contains RBBP4, CHAF1B and CHAF1A. CHAF1A binds directly to CHAF1B. Only minor amounts of RBBP4 are complexed with CHAF1A and CHAF1B in G1 phase. Interacts with PCNA; the interaction is direct. Interacts (via the PxVxL motif) with CBX5; the interaction is direct. Interacts with MBD1. Interacts with histones H3.1, H3.2 and H3.1t.

Its subcellular location is the nucleus. Its function is as follows. Acts as a component of the histone chaperone complex chromatin assembly factor 1 (CAF-1), which assembles histone octamers onto DNA during replication and repair. CAF-1 performs the first step of the nucleosome assembly process, bringing newly synthesized histones H3 and H4 to replicating DNA; histones H2A/H2B can bind to this chromatin precursor subsequent to DNA replication to complete the histone octamer. It may play a role in heterochromatin maintenance in proliferating cells by bringing newly synthesized cbx proteins to heterochromatic DNA replication foci. This Bos taurus (Bovine) protein is Chromatin assembly factor 1 subunit A (CHAF1A).